The chain runs to 437 residues: MTGRTVTVVGAGLAGAEAAWQAARRGIKVKLYEMRPEKLTPAHRSGYFAELVCSNSLRAAALENAVGLLKEEMRHLDSLVMACADVTSVPAGGALAVDRDLFARCVTERIAGNPLIEICREEVTAIPEGEAVIIATGPLTSDALASDISRFTGENCLFFYDAVAPIVAAESINMGKVFRSSRYGKGEAAYLNCPLSREEYEVFWEALVKAEKAPRKEFEKELHFEGCMPVEVLAARGKETLLYGPMKPVGLIDPRTGRRPYAVVQLRQENAAATLFNMVGFQTGLKWDEQKRVFRLIPGLEEAEFVRFGVMHRNTFINSPVLLHPTFQTRKNPALFFAGQITGVEGYVESAASGLMAGINAARLLAGKEPLVFPRNTAHGSLAHYITAADPAHFQPMNINFGLFPPFEARIRDKKERYRTVAKKALESIDRFKETLL.

Position 10-15 (10-15 (GAGLAG)) interacts with FAD.

Belongs to the MnmG family. TrmFO subfamily. The cofactor is FAD.

It is found in the cytoplasm. It catalyses the reaction uridine(54) in tRNA + (6R)-5,10-methylene-5,6,7,8-tetrahydrofolate + NADH + H(+) = 5-methyluridine(54) in tRNA + (6S)-5,6,7,8-tetrahydrofolate + NAD(+). The catalysed reaction is uridine(54) in tRNA + (6R)-5,10-methylene-5,6,7,8-tetrahydrofolate + NADPH + H(+) = 5-methyluridine(54) in tRNA + (6S)-5,6,7,8-tetrahydrofolate + NADP(+). In terms of biological role, catalyzes the folate-dependent formation of 5-methyl-uridine at position 54 (M-5-U54) in all tRNAs. The protein is Methylenetetrahydrofolate--tRNA-(uracil-5-)-methyltransferase TrmFO of Pelotomaculum thermopropionicum (strain DSM 13744 / JCM 10971 / SI).